The following is a 466-amino-acid chain: Asparagine--tRNA ligase (466 aa).

Belongs to the class-II aminoacyl-tRNA synthetase family. As to quaternary structure, homodimer.

It is found in the cytoplasm. The catalysed reaction is tRNA(Asn) + L-asparagine + ATP = L-asparaginyl-tRNA(Asn) + AMP + diphosphate + H(+). The polypeptide is Asparagine--tRNA ligase (Shewanella baltica (strain OS155 / ATCC BAA-1091)).